The sequence spans 72 residues: SRY-related protein MG43 (72 aa).

A DNA-binding region (HMG box) is located at residues 1-69 (VKRPMNAFMV…KHMADYPDYK (69 aa)).

It is found in the nucleus. The chain is SRY-related protein MG43 from Tarentola mauritanica (Common wall gecko).